The primary structure comprises 162 residues: Large ribosomal subunit protein uL15 (162 aa).

Basic and acidic residues predominate over residues 1 to 13 (MKLNEIRDNEGAT). Residues 1–37 (MKLNEIRDNEGATKNRMRVGRGIGSGKGKTAGRGVKG) form a disordered region. The segment covering 21 to 35 (RGIGSGKGKTAGRGV) has biased composition (gly residues).

The protein belongs to the universal ribosomal protein uL15 family. As to quaternary structure, part of the 50S ribosomal subunit.

Its function is as follows. Binds to the 23S rRNA. This Methylobacterium nodulans (strain LMG 21967 / CNCM I-2342 / ORS 2060) protein is Large ribosomal subunit protein uL15.